Consider the following 307-residue polypeptide: Beta-lactamase (307 aa).

The tat-type signal signal peptide spans Met-1 to Ala-34. Catalysis depends on Ser-84, which acts as the Acyl-ester intermediate. Residue Ser-142 participates in substrate binding. Glu-182 (proton acceptor) is an active-site residue. A substrate-binding site is contributed by Thr-251 to Thr-253.

This sequence belongs to the class-A beta-lactamase family. As to quaternary structure, monomer. In terms of processing, exported by the Tat system. The position of the signal peptide cleavage has not been experimentally proven.

The protein resides in the periplasm. It localises to the secreted. The catalysed reaction is a beta-lactam + H2O = a substituted beta-amino acid. With respect to regulation, is inhibited by clavulanate. Functionally, extended spectrum beta-lactamase (ESBL) that inactivates beta-lactam antibiotics by hydrolyzing the amide group of the beta-lactam ring. Displays high levels of penicillinase and cephalosporinase activity as well as measurable activity with carbapenems, including imipenem and meropenem. Plays a primary role in the intrinsic resistance of mycobacteria to beta-lactam antibiotics. The protein is Beta-lactamase (blaC) of Mycobacterium bovis (strain ATCC BAA-935 / AF2122/97).